We begin with the raw amino-acid sequence, 80 residues long: Moroidotoxin A (80 aa).

Positions 1-27 are cleaved as a signal peptide; the sequence is MAAVKKHLRFALVAAITIALLVAGSVA. A propeptide spanning residues 28–44 is cleaved from the precursor; the sequence is DESSEDIDNIVIKTPLD. Disulfide bonds link Cys-48-Cys-65, Cys-53-Cys-67, and Cys-61-Cys-76.

This sequence belongs to the gympietide family. Expressed in trichomes, that are stiff epidermal hairs located on the surface of petioles and leaves. Not expressed in other aerial parts.

The protein resides in the secreted. Neurotoxin certainly responsible for the defensive, persistent, and painful stings of the giant stinging tree. Inhibits inactivation of Nav1.7/SCN9A sodium channel in sensory neurons by directly interacting with TMEM233, a newly described Nav-interacting protein. Has virtually no effect on Nav1.7/SCN9A function in heterologous expression systems and in neurons that do not express TMEM233. Also weakly but significantly affects Nav1.8/SCN10A. Coexpression of TMEM233 with Nav also confers ExTxA sensitivity to Nav1.1-Nav1.6. On the Nav1.7/SCN9A channel, causes a significant hyperpolarizing shift in the voltage dependence of activation. Its effects on Nav currents are irreversible, with no apparent reduction in activity even after repeated wash steps over 30 minutes. In vivo, induces nocifensive behavior in mice (licking or biting and shaking or lifting of the affected paw) lasting for approximately 1 hour. In Dendrocnide moroides (Gympie stinging tree), this protein is Moroidotoxin A.